Reading from the N-terminus, the 524-residue chain is Pentatricopeptide repeat-containing protein At1g02150 (524 aa).

PPR repeat units lie at residues 168–202 (DRRVYGSLLNAYVRAKSREKAEALLNTMRDKGYAL), 203–237 (HPLPFNVMMTLYMNLREYDKVDAMVFEMKQKDIRL), 238–268 (DIYSYNIWLSSCGSLGSVEKMELVYQQMKSD), 274–304 (NWTTFSTMATMYIKMGETEKAEDALRKVEAR), 309–339 (NRIPYHYLLSLYGSLGNKKELYRVWHVYKSV), 344–378 (PNLGYHALVSSLVRMGDIEGAEKVYEEWLPVKSSY), and 379–413 (DPRIPNLLMNAYVKNDQLETAEGLFDHMVEMGGKP).

It belongs to the PPR family. P subfamily.

In Arabidopsis thaliana (Mouse-ear cress), this protein is Pentatricopeptide repeat-containing protein At1g02150.